The sequence spans 580 residues: Adenine deaminase 2 (580 aa).

This sequence belongs to the metallo-dependent hydrolases superfamily. Adenine deaminase family. Mn(2+) serves as cofactor.

The enzyme catalyses adenine + H2O + H(+) = hypoxanthine + NH4(+). The polypeptide is Adenine deaminase 2 (Latilactobacillus sakei subsp. sakei (strain 23K) (Lactobacillus sakei subsp. sakei)).